The primary structure comprises 257 residues: TLC domain-containing protein 3A (257 aa).

7 consecutive transmembrane segments (helical) span residues 1–21 (MLLTLAGGALFFPGLFALCTW), 42–62 (LVSSVHAVLATGSGIVIIRSC), 77–97 (VWFLIPYMIYDSYAMYLCEWC), 113–135 (FLSRNRLMITHHAVILFVLVPVA), 142–162 (LGDFFVGCIFTAELSTPFVSL), 181–201 (GILTLATFLSCRILLFPFMYW), and 220–240 (FYCNVANAFLVAPQIYWFCLL). In terms of domain architecture, TLC spans 33 to 249 (TDCVMISTRL…LCRKAVRLFD (217 aa)).

In terms of assembly, interacts with GGT7 isoform 3 and SLC3A2. As to expression, highly expressed in pancreas. Detected at intermediate levels in heart, placenta and kidney, and at low levels in brain, liver and skeletal muscle. Not detected in normal lung.

It localises to the cell membrane. The protein is TLC domain-containing protein 3A of Homo sapiens (Human).